The following is a 241-amino-acid chain: UDP-2,3-diacylglucosamine hydrolase (241 aa).

The Mn(2+) site is built by Asp8, His10, Asp41, Asn78, and His113. 78–79 lines the substrate pocket; sequence NR. Substrate-binding residues include Asp121, Ser159, Asn163, Lys166, and His194. Mn(2+) contacts are provided by His194 and His196.

This sequence belongs to the LpxH family. The cofactor is Mn(2+).

The protein resides in the cell inner membrane. The enzyme catalyses UDP-2-N,3-O-bis[(3R)-3-hydroxytetradecanoyl]-alpha-D-glucosamine + H2O = 2-N,3-O-bis[(3R)-3-hydroxytetradecanoyl]-alpha-D-glucosaminyl 1-phosphate + UMP + 2 H(+). The protein operates within glycolipid biosynthesis; lipid IV(A) biosynthesis; lipid IV(A) from (3R)-3-hydroxytetradecanoyl-[acyl-carrier-protein] and UDP-N-acetyl-alpha-D-glucosamine: step 4/6. Its function is as follows. Hydrolyzes the pyrophosphate bond of UDP-2,3-diacylglucosamine to yield 2,3-diacylglucosamine 1-phosphate (lipid X) and UMP by catalyzing the attack of water at the alpha-P atom. Involved in the biosynthesis of lipid A, a phosphorylated glycolipid that anchors the lipopolysaccharide to the outer membrane of the cell. In Shewanella putrefaciens (strain CN-32 / ATCC BAA-453), this protein is UDP-2,3-diacylglucosamine hydrolase.